Here is a 158-residue protein sequence, read N- to C-terminus: ATP synthase subunit delta, mitochondrial (158 aa).

The N-terminal 22 residues, 1–22 (MFRLTSARALFRVANVAARRTY), are a transit peptide targeting the mitochondrion.

The protein belongs to the ATPase epsilon chain family. In terms of assembly, F-type ATPases have 2 components, CF(1) - the catalytic core - and CF(0) - the membrane proton channel. CF(1) has five subunits: alpha(3), beta(3), gamma(1), delta(1), epsilon(1). CF(0) has three main subunits: a, b and c.

Its subcellular location is the mitochondrion. It localises to the mitochondrion inner membrane. Mitochondrial membrane ATP synthase (F(1)F(0) ATP synthase or Complex V) produces ATP from ADP in the presence of a proton gradient across the membrane which is generated by electron transport complexes of the respiratory chain. F-type ATPases consist of two structural domains, F(1) - containing the extramembraneous catalytic core, and F(0) - containing the membrane proton channel, linked together by a central stalk and a peripheral stalk. During catalysis, ATP turnover in the catalytic domain of F(1) is coupled via a rotary mechanism of the central stalk subunits to proton translocation. Part of the complex F(1) domain and of the central stalk which is part of the complex rotary element. Rotation of the central stalk against the surrounding alpha(3)beta(3) subunits leads to hydrolysis of ATP in three separate catalytic sites on the beta subunits. The chain is ATP synthase subunit delta, mitochondrial (ATP16) from Eremothecium gossypii (strain ATCC 10895 / CBS 109.51 / FGSC 9923 / NRRL Y-1056) (Yeast).